A 453-amino-acid chain; its full sequence is Cytochrome b-c1 complex subunit 2, mitochondrial (453 aa).

Residues 1–14 constitute a mitochondrion transit peptide; the sequence is MKLLTRAGSFSRFY. K66, K199, and K250 each carry N6-acetyllysine.

This sequence belongs to the peptidase M16 family. UQCRC2/QCR2 subfamily. Component of the ubiquinol-cytochrome c oxidoreductase (cytochrome b-c1 complex, complex III, CIII), a multisubunit enzyme composed of 11 subunits. The complex is composed of 3 respiratory subunits cytochrome b, cytochrome c1 and Rieske protein UQCRFS1, 2 core protein subunits UQCRC1/QCR1 and UQCRC2/QCR2, and 6 low-molecular weight protein subunits UQCRH/QCR6, UQCRB/QCR7, UQCRQ/QCR8, UQCR10/QCR9, UQCR11/QCR10 and subunit 9, the cleavage product of Rieske protein UQCRFS1. The complex exists as an obligatory dimer and forms supercomplexes (SCs) in the inner mitochondrial membrane with NADH-ubiquinone oxidoreductase (complex I, CI) and cytochrome c oxidase (complex IV, CIV), resulting in different assemblies (supercomplex SCI(1)III(2)IV(1) and megacomplex MCI(2)III(2)IV(2)). Interacts with RAB5IF. Interacts with STMP1.

The protein localises to the mitochondrion inner membrane. Its function is as follows. Component of the ubiquinol-cytochrome c oxidoreductase, a multisubunit transmembrane complex that is part of the mitochondrial electron transport chain which drives oxidative phosphorylation. The respiratory chain contains 3 multisubunit complexes succinate dehydrogenase (complex II, CII), ubiquinol-cytochrome c oxidoreductase (cytochrome b-c1 complex, complex III, CIII) and cytochrome c oxidase (complex IV, CIV), that cooperate to transfer electrons derived from NADH and succinate to molecular oxygen, creating an electrochemical gradient over the inner membrane that drives transmembrane transport and the ATP synthase. The cytochrome b-c1 complex catalyzes electron transfer from ubiquinol to cytochrome c, linking this redox reaction to translocation of protons across the mitochondrial inner membrane, with protons being carried across the membrane as hydrogens on the quinol. In the process called Q cycle, 2 protons are consumed from the matrix, 4 protons are released into the intermembrane space and 2 electrons are passed to cytochrome c. The 2 core subunits UQCRC1/QCR1 and UQCRC2/QCR2 are homologous to the 2 mitochondrial-processing peptidase (MPP) subunits beta-MPP and alpha-MPP respectively, and they seem to have preserved their MPP processing properties. May be involved in the in situ processing of UQCRFS1 into the mature Rieske protein and its mitochondrial targeting sequence (MTS)/subunit 9 when incorporated into complex III. The protein is Cytochrome b-c1 complex subunit 2, mitochondrial (UQCRC2) of Homo sapiens (Human).